Reading from the N-terminus, the 224-residue chain is tRNA (guanine-N(7)-)-methyltransferase (224 aa).

Residues Glu-45, Glu-70, Asp-97, and Asp-119 each contribute to the S-adenosyl-L-methionine site. The active site involves Asp-119. Substrate contacts are provided by residues Lys-123, Asp-155, and 199–202 (TEYE).

The protein belongs to the class I-like SAM-binding methyltransferase superfamily. TrmB family.

It catalyses the reaction guanosine(46) in tRNA + S-adenosyl-L-methionine = N(7)-methylguanosine(46) in tRNA + S-adenosyl-L-homocysteine. It functions in the pathway tRNA modification; N(7)-methylguanine-tRNA biosynthesis. In terms of biological role, catalyzes the formation of N(7)-methylguanine at position 46 (m7G46) in tRNA. The sequence is that of tRNA (guanine-N(7)-)-methyltransferase from Ureaplasma parvum serovar 3 (strain ATCC 27815 / 27 / NCTC 11736).